A 196-amino-acid chain; its full sequence is HTH-type transcriptional regulator EcpR (196 aa).

The 59-residue stretch at 138 to 196 (KDIKKDKITDREMEIIRMTAQGMLPKSIARIENCSVKTVYTHRRNAEAKLYSKIYKLVP) folds into the HTH luxR-type domain. The segment at residues 162–181 (PKSIARIENCSVKTVYTHRR) is a DNA-binding region (H-T-H motif).

The protein belongs to the EcpR/MatA family.

It is found in the cytoplasm. In terms of biological role, part of the ecpRABCDE operon, which encodes the E.coli common pilus (ECP). ECP is found in both commensal and pathogenic strains and plays a dual role in early-stage biofilm development and host cell recognition. Positively regulates the expression of the ecp operon. This chain is HTH-type transcriptional regulator EcpR (ecpR), found in Escherichia coli O17:K52:H18 (strain UMN026 / ExPEC).